A 689-amino-acid polypeptide reads, in one-letter code: Glycine--tRNA ligase beta subunit (689 aa).

Belongs to the class-II aminoacyl-tRNA synthetase family. As to quaternary structure, tetramer of two alpha and two beta subunits.

The protein resides in the cytoplasm. The catalysed reaction is tRNA(Gly) + glycine + ATP = glycyl-tRNA(Gly) + AMP + diphosphate. In Serratia proteamaculans (strain 568), this protein is Glycine--tRNA ligase beta subunit.